Reading from the N-terminus, the 442-residue chain is MKINVRGSTMVRPAEETPRVRLWNSSLDLVVPRFHTPSVYFFRRGEAAAAEGGSYFDGERMRRALAEALVPFYPMAGRLAHDEDGRVEIDCNGEGVLFVEADAPGATVDDFGDFAPTMDLKRLIPTVDYTDGISSFPILVLQVTHFKCGGVALGVGMQHHVADGFSGLHFINSWADLCRGVPIAVMPFIDRTLVRARDPPAPSHPHVEYQPAPAMLAPEPPQALTAKPAPPPTAVDIFKLSRSDLGRLRSQLPRGEGAPRYSTYAVLAAHVWRCASLARGLPAEQPTKLYCATDGRQRLQPSLPDGYFGNVIFTATPLAEAGRVTGSLADGAATIQSALDRMDSGYCRSALDYLELQPDLSALVRGAHTFRCPNLGLTSWVRLPIHDADFGWGRPVFMGPGGIAYEGLAFVLPSASGDGSLSVAISLQAEHMEKFRKMIFDF.

Residues His-159 and Asp-389 each act as proton acceptor in the active site.

It belongs to the plant acyltransferase family. Expressed in roots and leaves. Expressed at low levels in stems and seeds.

In terms of biological role, hydroxycinnamoyl transferase that catalyzes the transfer of an acyl from p-coumaryol-CoA to various acyl acceptors. Can use feruloyl-CoA and caffeoyl-CoA as acyl donors. In Oryza sativa subsp. japonica (Rice), this protein is Hydroxycinnamoyltransferase 2.